The sequence spans 221 residues: ATP synthase subunit a 1 (221 aa).

Transmembrane regions (helical) follow at residues 20-40 (LTIVTTWALMLLLAGGSALIT), 78-98 (YLPFIAALFLFIATANLCTVI), 108-128 (LSTTAALALSVFIAVPLFGIA), 174-194 (MILVILLTISPLVFPVLMNIL), and 196-216 (LLTGMVQAYIFSILATVYIAA).

The protein belongs to the ATPase A chain family. In terms of assembly, F-type ATPases have 2 components, CF(1) - the catalytic core - and CF(0) - the membrane proton channel. CF(1) has five subunits: alpha(3), beta(3), gamma(1), delta(1), epsilon(1). CF(0) has four main subunits: a, b, b' and c.

The protein localises to the cell inner membrane. Key component of the proton channel; it plays a direct role in the translocation of protons across the membrane. The protein is ATP synthase subunit a 1 of Chlorobaculum tepidum (strain ATCC 49652 / DSM 12025 / NBRC 103806 / TLS) (Chlorobium tepidum).